The sequence spans 64 residues: Large ribosomal subunit protein bL35 (64 aa).

A compositionally biased stretch (basic residues) spans 1-28 (MSKAKTHSGAAKRFKKTASGYKHKHAFK). The tract at residues 1 to 51 (MSKAKTHSGAAKRFKKTASGYKHKHAFKSHILTKMTTKRKRQLRGTSLLNA) is disordered.

This sequence belongs to the bacterial ribosomal protein bL35 family.

This Saccharophagus degradans (strain 2-40 / ATCC 43961 / DSM 17024) protein is Large ribosomal subunit protein bL35.